Consider the following 101-residue polypeptide: Acylphosphatase (101 aa).

In terms of domain architecture, Acylphosphatase-like spans 13–101 (RARILVRGVV…GEFRGFEIRY (89 aa)). Residues R28 and N46 contribute to the active site.

This sequence belongs to the acylphosphatase family.

The enzyme catalyses an acyl phosphate + H2O = a carboxylate + phosphate + H(+). This chain is Acylphosphatase (acyP), found in Aeropyrum pernix (strain ATCC 700893 / DSM 11879 / JCM 9820 / NBRC 100138 / K1).